The following is a 188-amino-acid chain: Translocon-associated protein subunit beta (188 aa).

An N-terminal signal peptide occupies residues Met-1–Cys-15. Residues Val-16 to Tyr-151 lie on the Lumenal side of the membrane. N-linked (GlcNAc...) asparagine glycosylation is found at Asn-93 and Asn-109. The chain crosses the membrane as a helical span at residues Thr-152–Phe-172. Over Gln-173 to Thr-188 the chain is Cytoplasmic.

The protein belongs to the TRAP-beta family. In terms of assembly, heterotetramer of TRAP-alpha, TRAP-beta, TRAP-delta and TRAP-gamma.

Its subcellular location is the endoplasmic reticulum membrane. TRAP proteins are part of a complex whose function is to bind calcium to the ER membrane and thereby regulate the retention of ER resident proteins. The sequence is that of Translocon-associated protein subunit beta from Caenorhabditis elegans.